The sequence spans 192 residues: GTP cyclohydrolase-2 (192 aa).

50–54 lines the GTP pocket; that stretch reads RLHSE. Zn(2+)-binding residues include Cys-55, Cys-66, and Cys-68. GTP-binding positions include 92–94 and Thr-114; that span reads EGR. Catalysis depends on Asp-126, which acts as the Proton acceptor. The active-site Nucleophile is the Arg-128. Residues Thr-149 and Lys-154 each contribute to the GTP site.

This sequence belongs to the GTP cyclohydrolase II family. Zn(2+) is required as a cofactor.

It carries out the reaction GTP + 4 H2O = 2,5-diamino-6-hydroxy-4-(5-phosphoribosylamino)-pyrimidine + formate + 2 phosphate + 3 H(+). It functions in the pathway cofactor biosynthesis; riboflavin biosynthesis; 5-amino-6-(D-ribitylamino)uracil from GTP: step 1/4. Its function is as follows. Catalyzes the conversion of GTP to 2,5-diamino-6-ribosylamino-4(3H)-pyrimidinone 5'-phosphate (DARP), formate and pyrophosphate. This chain is GTP cyclohydrolase-2, found in Helicobacter pylori (strain J99 / ATCC 700824) (Campylobacter pylori J99).